We begin with the raw amino-acid sequence, 103 residues long: Large ribosomal subunit protein bL21 (103 aa).

It belongs to the bacterial ribosomal protein bL21 family. Part of the 50S ribosomal subunit. Contacts protein L20.

Functionally, this protein binds to 23S rRNA in the presence of protein L20. This is Large ribosomal subunit protein bL21 from Legionella pneumophila (strain Lens).